Consider the following 796-residue polypeptide: Polyribonucleotide nucleotidyltransferase (796 aa).

The Mg(2+) site is built by Asp-490 and Asp-496. Positions 557–616 (PRIESIFINKDKIRNVIGSGGKNIRDICEKTGAKIEIIQDGTVMIYAVNNEAVEYAKSMI) constitute a KH domain. An S1 motif domain is found at 626–693 (GKVFEGTVVE…DREHIQLSMR (68 aa)). Low complexity-rich tracts occupy residues 717–728 (DDSCGSTGGSSF), 747–759 (GGSS…NSNG), and 769–784 (SSNG…SNSR). The disordered stretch occupies residues 717 to 796 (DDSCGSTGGS…HDVPRKPRFF (80 aa)). Residues 785-796 (NGHDVPRKPRFF) show a composition bias toward basic and acidic residues.

Belongs to the polyribonucleotide nucleotidyltransferase family. Mg(2+) is required as a cofactor.

The protein localises to the cytoplasm. It catalyses the reaction RNA(n+1) + phosphate = RNA(n) + a ribonucleoside 5'-diphosphate. Involved in mRNA degradation. Catalyzes the phosphorolysis of single-stranded polyribonucleotides processively in the 3'- to 5'-direction. The chain is Polyribonucleotide nucleotidyltransferase from Ehrlichia chaffeensis (strain ATCC CRL-10679 / Arkansas).